Here is a 33-residue protein sequence, read N- to C-terminus: DCLGWFKSCDPKNDKCCKNYTCSRRDRWCKYYL.

Intrachain disulfides connect cysteine 2–cysteine 17, cysteine 9–cysteine 22, and cysteine 16–cysteine 29. Leucine 33 carries the post-translational modification Leucine amide.

The protein belongs to the neurotoxin 10 (Hwtx-1) family. 04 (CcoTx1) subfamily. In terms of tissue distribution, expressed by the venom gland.

The protein localises to the secreted. In terms of biological role, inhibits several voltage-gated sodium channels and only one voltage-gated calcium channel (Cav2.2/CACNA1B (IC(50)=1.1 uM) and Nav1.2/SCN2A (IC(50)=3.7-80 nM), Nav1.3/SCN3A (IC(50)=88-5570 nM), Nav1.1/SCN1A (IC(50)=170-407 nM), Nav1.7/SCN9A (IC(50)=95.5-230 nM), Nav1.6/SCN6A (IC(50)=49.9-3990 nM), Nav1.4/SCN4A (IC(50)=113-400 nM or &gt;10 uM), Nav1.5/SCN5A (IC(50)=1524-1634 nM or &gt;10 uM)). The toxin acts by shifting the voltage dependence of channel activation to more depolarized potentials and by blocking the inward component of the sodium current. It shows moderate affinity for lipid bilayers without cholesterol and high affinity for lipid bilayers containing cholesterol. In vivo, this toxin causes general ataxia, lack of response to stimuli, and semiparalysis. After a few minutes, the mice are unable to stand, and breathing is reduced in rhythm and intensity. Symptoms gradually increase with progressive slowing of breathing and flaccid paralysis; death occurred within 10 to 20 minutes post injection. Animals remain totally flaccid, and no symptoms of excitatory neurotoxicity are observed. The protein is Beta-theraphotoxin-Cm1b of Ceratogyrus marshalli (Straighthorned baboon tarantula).